The following is a 467-amino-acid chain: Serine/threonine-protein kinase AFC1 (467 aa).

Residues 115–443 (YQILSKMGEG…AREALNHPFF (329 aa)) enclose the Protein kinase domain. ATP contacts are provided by residues 121-129 (MGEGTFGQV) and K144. D240 (proton acceptor) is an active-site residue. Residues 447 to 467 (REQSIPPFNPNPHPFLYNQKN) are disordered.

This sequence belongs to the protein kinase superfamily. CMGC Ser/Thr protein kinase family. Lammer subfamily.

The catalysed reaction is L-seryl-[protein] + ATP = O-phospho-L-seryl-[protein] + ADP + H(+). It catalyses the reaction L-threonyl-[protein] + ATP = O-phospho-L-threonyl-[protein] + ADP + H(+). The enzyme catalyses L-tyrosyl-[protein] + ATP = O-phospho-L-tyrosyl-[protein] + ADP + H(+). Functionally, activator of yeast transcription factor, STE12. This Arabidopsis thaliana (Mouse-ear cress) protein is Serine/threonine-protein kinase AFC1 (AFC1).